A 31-amino-acid polypeptide reads, in one-letter code: Protamine CIII (31 aa).

The disordered stretch occupies residues Met-1–Arg-31.

In terms of tissue distribution, testis.

It is found in the nucleus. Its subcellular location is the chromosome. In terms of biological role, protamines substitute for histones in the chromatin of sperm during the haploid phase of spermatogenesis. They compact sperm DNA into a highly condensed, stable and inactive complex. This chain is Protamine CIII, found in Oncorhynchus mykiss (Rainbow trout).